The primary structure comprises 330 residues: GTPase Obg (330 aa).

Positions 1–159 (MHFIDEVKIY…MWIHLSLKLL (159 aa)) constitute an Obg domain. The OBG-type G domain maps to 160 to 327 (SDVGLVGLPN…IVKLALETIK (168 aa)). GTP contacts are provided by residues 166-173 (GLPNAGKS), 191-195 (FTTLV), 212-215 (DIPG), 279-282 (NKCD), and 308-310 (STC). Mg(2+)-binding residues include Ser-173 and Thr-193.

Belongs to the TRAFAC class OBG-HflX-like GTPase superfamily. OBG GTPase family. As to quaternary structure, monomer. The cofactor is Mg(2+).

The protein localises to the cytoplasm. Functionally, an essential GTPase which binds GTP, GDP and possibly (p)ppGpp with moderate affinity, with high nucleotide exchange rates and a fairly low GTP hydrolysis rate. Plays a role in control of the cell cycle, stress response, ribosome biogenesis and in those bacteria that undergo differentiation, in morphogenesis control. This chain is GTPase Obg, found in Rickettsia rickettsii (strain Iowa).